The sequence spans 314 residues: Pathogenicity locus probable regulatory protein HrpR (314 aa).

Residues 11–239 form the Sigma-54 factor interaction domain; it reads TRWNVTALSA…LKSAANAICP (229 aa). ATP contacts are provided by residues 39 to 46 and 101 to 110; these read GETGTGKD and SNGGTLYLDE. The segment at residues 281–300 is a DNA-binding region (H-T-H motif); the sequence is FDAVLEELELPRRTLYHRMK.

Member of the two-component regulatory system HrpR/HrpS that regulates the activation of the sigma factor hrpL which itself induces the expression of hprD as well as other hrp loci which are involved in plant pathogenicity, hrmA and avr genes. Probably interacts with sigma-54. The chain is Pathogenicity locus probable regulatory protein HrpR (hrpR) from Pseudomonas syringae pv. syringae.